The primary structure comprises 154 residues: Protein X (154 aa).

The tract at residues 68-117 is mitochondrial targeting sequence; it reads PCALRFTSARRMETTVNAHQILPKVLHKRTLGLSAMSTTDLEAYFKDCLF.

This sequence belongs to the orthohepadnavirus protein X family. May form homodimer. May interact with host CEBPA, CFLAR, CREB1, DDB1, E4F1, HBXIP, HSPD1/HSP60, NFKBIA, POLR2E and SMAD4. Interacts with host SMC5-SMC6 complex and induces its degradation. Interacts with host TRPC4AP; leading to prevent ubiquitination of TRPC4AP. Interacts with host PLSCR1; this interaction promotes ubiquitination and degradation of HBx and impairs HBx-mediated cell proliferation. In terms of processing, a fraction may be phosphorylated in insect cells and HepG2 cells, a human hepatoblastoma cell line. Phosphorylated in vitro by host protein kinase C or mitogen-activated protein kinase. N-acetylated in insect cells.

It is found in the host cytoplasm. The protein localises to the host nucleus. It localises to the host mitochondrion. In terms of biological role, multifunctional protein that plays a role in silencing host antiviral defenses and promoting viral transcription. Does not seem to be essential for HBV infection. May be directly involved in development of cirrhosis and liver cancer (hepatocellular carcinoma). Most of cytosolic activities involve modulation of cytosolic calcium. The effect on apoptosis is controversial depending on the cell types in which the studies have been conducted. May induce apoptosis by localizing in mitochondria and causing loss of mitochondrial membrane potential. May also modulate apoptosis by binding host CFLAR, a key regulator of the death-inducing signaling complex (DISC). Promotes viral transcription by using the host E3 ubiquitin ligase DDB1 to target the SMC5-SMC6 complex to proteasomal degradation. This host complex would otherwise bind to viral episomal DNA, and prevents its transcription. Moderately stimulates transcription of many different viral and cellular transcription elements. Promoters and enhancers stimulated by HBx contain DNA binding sites for NF-kappa-B, AP-1, AP-2, c-EBP, ATF/CREB, or the calcium-activated factor NF-AT. This Hepatitis B virus genotype E subtype ayw4 (isolate Kou) (HBV-E) protein is Protein X.